A 182-amino-acid polypeptide reads, in one-letter code: Large ribosomal subunit protein uL5 (182 aa).

It belongs to the universal ribosomal protein uL5 family. In terms of assembly, part of the 50S ribosomal subunit; part of the 5S rRNA/L5/L18/L25 subcomplex. Contacts the 5S rRNA and the P site tRNA. Forms a bridge to the 30S subunit in the 70S ribosome.

Functionally, this is one of the proteins that bind and probably mediate the attachment of the 5S RNA into the large ribosomal subunit, where it forms part of the central protuberance. In the 70S ribosome it contacts protein S13 of the 30S subunit (bridge B1b), connecting the 2 subunits; this bridge is implicated in subunit movement. Contacts the P site tRNA; the 5S rRNA and some of its associated proteins might help stabilize positioning of ribosome-bound tRNAs. The polypeptide is Large ribosomal subunit protein uL5 (Borrelia duttonii (strain Ly)).